We begin with the raw amino-acid sequence, 386 residues long: 5-hydroxytryptamine receptor 1B (386 aa).

Topologically, residues 1–42 (MEEQGIQCAPPPPAASQTGVPLVNLSHNCSAESHIYQDSIAL) are extracellular. 2 N-linked (GlcNAc...) asparagine glycosylation sites follow: N24 and N28. The helical transmembrane segment at 43-68 (PWKVLLVALLALITLATTLSNAFVIA) threads the bilayer. At 69–82 (TVYRTRKLHTPANY) the chain is on the cytoplasmic side. The chain crosses the membrane as a helical span at residues 83–107 (LIASLAVTDLLVSILVMPVSTMYTV). At 108 to 115 (TGRWTLGQ) the chain is on the extracellular side. A helical transmembrane segment spans residues 116–141 (VVCDFWLSSDITCCTASIMHLCVIAL). A disulfide bridge links C118 with C195. Positions 125 and 130 each coordinate ergotamine. A DRY motif; important for ligand-induced conformation changes and signaling motif is present at residues 142–144 (DRY). Topologically, residues 142–161 (DRYWAITDAVEYAAKRTPKR) are cytoplasmic. A helical membrane pass occupies residues 162 to 180 (AAIMIALVWVFSISISLPP). Residues 181–201 (FFWRQAKAEEEVLTCLVNTDH) are Extracellular-facing. V197 lines the ergotamine pocket. Residues 202 to 225 (VLYTVYSTGGAFYLPTLLLIALYG) form a helical membrane-spanning segment. The Cytoplasmic portion of the chain corresponds to 226-311 (RIYVEARSRI…AARERKATKT (86 aa)). Residues 255 to 268 (DSPGSTTSVTSINS) show a composition bias toward polar residues. Residues 255-278 (DSPGSTTSVTSINSRAPDLPSESG) form a disordered region. The chain crosses the membrane as a helical span at residues 312-333 (LGIILGAFIVCWLPFFIISLVM). Residues 334 to 343 (PICKDACWFH) lie on the Extracellular side of the membrane. A helical membrane pass occupies residues 344–366 (MATLDFFNWLGYLNSLINPIIYT). The short motif at 361 to 365 (NPIIY) is the NPxxY motif; important for ligand-induced conformation changes and signaling element. Over 367-386 (MSNEDFKQAFHKLIRFKCAG) the chain is Cytoplasmic. The S-palmitoyl cysteine moiety is linked to residue C384.

This sequence belongs to the G-protein coupled receptor 1 family. As to quaternary structure, homodimer. Heterodimer with HTR1D. In terms of processing, phosphorylated. Desensitization of the receptor may be mediated by its phosphorylation. Post-translationally, palmitoylated.

It is found in the cell membrane. Its function is as follows. G-protein coupled receptor for 5-hydroxytryptamine (serotonin). Also functions as a receptor for ergot alkaloid derivatives, various anxiolytic and antidepressant drugs and other psychoactive substances, such as lysergic acid diethylamide (LSD). Ligand binding causes a conformation change that triggers signaling via guanine nucleotide-binding proteins (G proteins) and modulates the activity of downstream effectors, such as adenylate cyclase. HTR1B is coupled to G(i)/G(o) G alpha proteins and mediates inhibitory neurotransmission by inhibiting adenylate cyclase activity. Arrestin family members inhibit signaling via G proteins and mediate activation of alternative signaling pathways. Regulates the release of 5-hydroxytryptamine, dopamine and acetylcholine in the brain, and thereby affects neural activity, nociceptive processing, pain perception, mood and behavior. Besides, plays a role in vasoconstriction of cerebral arteries. The chain is 5-hydroxytryptamine receptor 1B (HTR1B) from Cricetulus griseus (Chinese hamster).